The sequence spans 193 residues: dCTP deaminase (193 aa).

DCTP-binding positions include 110–115, aspartate 128, 136–138, tyrosine 171, lysine 178, and glutamine 182; these read RSSLAR and VLE. Glutamate 138 functions as the Proton donor/acceptor in the catalytic mechanism. Over residues 170 to 181 the composition is skewed to basic and acidic residues; it reads PYNRRQDAKYRD. The segment at 170-193 is disordered; sequence PYNRRQDAKYRDQQGAVASRIDKD.

Belongs to the dCTP deaminase family. Homotrimer.

The catalysed reaction is dCTP + H2O + H(+) = dUTP + NH4(+). Its pathway is pyrimidine metabolism; dUMP biosynthesis; dUMP from dCTP (dUTP route): step 1/2. Catalyzes the deamination of dCTP to dUTP. The protein is dCTP deaminase of Enterobacter sp. (strain 638).